The primary structure comprises 434 residues: Trigger factor (434 aa).

A PPIase FKBP-type domain is found at Glu161–Pro246.

This sequence belongs to the FKBP-type PPIase family. Tig subfamily.

It is found in the cytoplasm. The enzyme catalyses [protein]-peptidylproline (omega=180) = [protein]-peptidylproline (omega=0). Functionally, involved in protein export. Acts as a chaperone by maintaining the newly synthesized protein in an open conformation. Functions as a peptidyl-prolyl cis-trans isomerase. This is Trigger factor from Pectobacterium atrosepticum (strain SCRI 1043 / ATCC BAA-672) (Erwinia carotovora subsp. atroseptica).